We begin with the raw amino-acid sequence, 314 residues long: Porphobilinogen deaminase (314 aa).

Cys-241 is subject to S-(dipyrrolylmethanemethyl)cysteine.

Belongs to the HMBS family. As to quaternary structure, monomer. It depends on dipyrromethane as a cofactor.

The catalysed reaction is 4 porphobilinogen + H2O = hydroxymethylbilane + 4 NH4(+). It participates in porphyrin-containing compound metabolism; protoporphyrin-IX biosynthesis; coproporphyrinogen-III from 5-aminolevulinate: step 2/4. The protein operates within porphyrin-containing compound metabolism; chlorophyll biosynthesis. In terms of biological role, tetrapolymerization of the monopyrrole PBG into the hydroxymethylbilane pre-uroporphyrinogen in several discrete steps. The sequence is that of Porphobilinogen deaminase from Chloroherpeton thalassium (strain ATCC 35110 / GB-78).